The sequence spans 943 residues: AP-1 complex subunit beta-1 (943 aa).

The residue at position 318 (K318) is an N6-acetyllysine. Position 574 is a 3'-nitrotyrosine (Y574). Residues 584-621 (GGRGVVHKSLPPRTASSESTESPETAPAGAPAGDQPDV) form a disordered region. The span at 594 to 616 (PPRTASSESTESPETAPAGAPAG) shows a compositional bias: low complexity.

This sequence belongs to the adaptor complexes large subunit family. Adaptor protein complex 1 (AP-1) is a heterotetramer composed of two large adaptins (gamma-type subunit AP1G1 and beta-type subunit AP1B1), a medium adaptin (mu-type subunit AP1M1 or AP1M2) and a small adaptin (sigma-type subunit AP1S1 or AP1S2 or AP1S3). In terms of tissue distribution, widely expressed.

It is found in the cytoplasmic vesicle. It localises to the clathrin-coated vesicle membrane. The protein resides in the golgi apparatus. Its function is as follows. Subunit of clathrin-associated adaptor protein complex 1 that plays a role in protein sorting in the late-Golgi/trans-Golgi network (TGN) and/or endosomes. The AP complexes mediate both the recruitment of clathrin to membranes and the recognition of sorting signals within the cytosolic tails of transmembrane cargo molecules. The sequence is that of AP-1 complex subunit beta-1 (Ap1b1) from Mus musculus (Mouse).